A 136-amino-acid chain; its full sequence is Salivary protein 15 Iric-2 (136 aa).

The N-terminal stretch at 1-22 is a signal peptide; it reads MESFVAMKVVCIVLLFVIAAEA. Asn105 is a glycosylation site (N-linked (GlcNAc...) asparagine). Residues 117–136 form a CD4-binding region; sequence GPKNQTCENKDQCVPHIPGC.

Belongs to the salp15 family. In terms of assembly, interacts with host CD4. Interacts with host DC-SIGN (CD209). Interacts with Borrelia outer surface protein C (OspC). Expressed in salivary glands. Detected in fed adult female.

The protein localises to the secreted. Its function is as follows. Salivary tick protein that downregulates host immune system by binding to both dendritic cells, and CD4(+) T cells. Specifically binds to the CD4 coreceptor on T cells. This interaction prevents the activation of the Src kinase, Lck, and its downstream substrate Zap-70, and results in deficient activation of PLCgamma1, the repression of calcium fluxes triggered by T-cell antigen receptor (TCR) ligation, and a subsequent reduction in interleukin-2 production. This salivary protein also binds to DC-SIGN (CD209) on dendritic cells (DC) and activates the Raf-1 kinase/MEK signaling pathway that results in down-regulating expression of pro-inflammatory cytokines. Furthermore, it inhibits T cell proliferation induced by DCs. In addition, it inhibits in vitro keratinocyte inflammation induced by Borrelia burgdorferi or by the major outer surface protein (OspC) of Borrelia. In addition, it downregulates chemokines and monocyte chemoattractant protein 1, as well as several antimicrobial peptides such as defensins, cathelicidin, psoriasin, and RNase 7. Apart from its immunomodulatory activities, it is also associated with protection of Borrelia spirochetes from antibody-mediated killing through its binding to OspC. In vivo, tests on different immune disease animal models show promising therapeutic results, e.g., in inhibiting HIV infection, experimental autoimmune encephalomyelitis, transplantation rejection, and asthma. This is Salivary protein 15 Iric-2 from Ixodes ricinus (Common tick).